A 302-amino-acid chain; its full sequence is MFLQKTIRKKTVVQGIGIHSGDPCTLTFRPAPADTGVYFIRTDLPGSPSLKVTARNVQATSHQTTIGGPAFSVATIEHCVSALSALRIDNLFIELDGPEIPIGDGSARVFLEALLAVGIVEQDQPRKYCYITEPIYFSEGEKHAYVVPYHGLRLTVTIDFPNPTIGKQTIDLDINEQSFGRDVANARTFGFMKDVEALKSRGLAKGGSLDNCIVLDGENVVNPEGLRWADEFVRHKCLDALGDLVTLEMPLMGHVVLYKAGHDVMNKLVRKIWDSPTSYRHVELGADISDEVRRYTGWTVPV.

Zn(2+) contacts are provided by histidine 78, histidine 235, and aspartate 239. Histidine 262 functions as the Proton donor in the catalytic mechanism.

Belongs to the LpxC family. Zn(2+) is required as a cofactor.

It catalyses the reaction a UDP-3-O-[(3R)-3-hydroxyacyl]-N-acetyl-alpha-D-glucosamine + H2O = a UDP-3-O-[(3R)-3-hydroxyacyl]-alpha-D-glucosamine + acetate. It functions in the pathway glycolipid biosynthesis; lipid IV(A) biosynthesis; lipid IV(A) from (3R)-3-hydroxytetradecanoyl-[acyl-carrier-protein] and UDP-N-acetyl-alpha-D-glucosamine: step 2/6. Functionally, catalyzes the hydrolysis of UDP-3-O-myristoyl-N-acetylglucosamine to form UDP-3-O-myristoylglucosamine and acetate, the committed step in lipid A biosynthesis. The sequence is that of UDP-3-O-acyl-N-acetylglucosamine deacetylase from Bdellovibrio bacteriovorus (strain ATCC 15356 / DSM 50701 / NCIMB 9529 / HD100).